Here is a 138-residue protein sequence, read N- to C-terminus: Thyrotropin subunit beta (138 aa).

An N-terminal signal peptide occupies residues 1–20; sequence MTATFLMSMIFGLACGQAMS. 6 disulfide bridges follow: C22–C72, C36–C87, C39–C125, C47–C103, C51–C105, and C108–C115. N43 carries an N-linked (GlcNAc...) asparagine glycan. Positions 133 to 138 are excised as a propeptide; sequence MVGFSI.

This sequence belongs to the glycoprotein hormones subunit beta family. In terms of assembly, heterodimer of a common alpha chain and a unique beta chain which confers biological specificity to thyrotropin, lutropin, follitropin and gonadotropin.

It localises to the secreted. Its function is as follows. Indispensable for the control of thyroid structure and metabolism. The sequence is that of Thyrotropin subunit beta (TSHB) from Bos taurus (Bovine).